Consider the following 468-residue polypeptide: Keratin, type I cytoskeletal 26 (468 aa).

The tract at residues 1–82 is head; the sequence is MSFRLSGGSR…GNEHSLLSGN (82 aa). The segment at 83–118 is coil 1A; it reads EKVTMQNLNDRLASYLDHVHALEEANADLEQKIKGW. Positions 83-398 constitute an IF rod domain; sequence EKVTMQNLND…NLLDGEERKS (316 aa). A linker 1 region spans residues 119-140; it reads YEKCEPGSSREHDHDYSRYFSV. A coil 1B region spans residues 141–232; it reads IEDLKRQIIS…KSHEEEMEVL (92 aa). Residues 233–255 are linker 12; the sequence is QYTAGGNVNVEMNATPGVDLTVL. Positions 256–394 are coil 2; it reads LNNMRAEYED…DIYCNLLDGE (139 aa). The interval 395-465 is tail; that stretch reads ERKSKSTCYK…NITVEQRVPS (71 aa).

It belongs to the intermediate filament family. As to quaternary structure, heterotetramer of two type I and two type II keratins. In terms of tissue distribution, strongly expressed in skin and scalp, and weak expression observed in thymus and tongue. In the hair follicle, expression is restricted to the mid- to upper inner root sheath cuticle, being present slightly above the apex of the dermal papilla (at protein level).

The polypeptide is Keratin, type I cytoskeletal 26 (Homo sapiens (Human)).